The sequence spans 444 residues: Docking protein 3 (444 aa).

In terms of domain architecture, PH spans 7-123 (PVKDGILYQQ…WVDPICQLAF (117 aa)). Serine 138 carries the phosphoserine modification. Residues 157–261 (EVTEFPVIVQ…ARQRERLPEL (105 aa)) form the IRS-type PTB domain. Residue serine 274 is modified to Phosphoserine. Positions 278 to 299 (LEPPGELREVAPGFELPTPRKL) are disordered. A phosphoserine mark is found at serine 308 and serine 314. Tyrosine 325 carries the phosphotyrosine modification. Residues 354–390 (GLTNGGPEAQEGPPGGRSPLGSPIYHNTEDLSWPGSA) form a disordered region. Residues 358 to 376 (GGPEAQEGPPGGRSPLGSP) are compositionally biased toward low complexity. Serine 371 carries the post-translational modification Phosphoserine.

This sequence belongs to the DOK family. Type A subfamily. On tyrosine phosphorylation, interacts with CSK and INPP5D/SHIP1 via their SH2 domains. Both Tyr-325 and Tyr-343 are required for interaction with INPP5D. Only Tyr-325 is required for interaction with CSK. Binds ABL1 through the PTB domain and in a kinase-dependent manner. Does not interact with RasGAP. Post-translationally, constitutively tyrosine-phosphorylated. In terms of processing, on IL2 stimulation, phosphorylated on C-terminal tyrosine residues possibly by Src kinases. Can also be phosphorylated by ABL1 kinase. In terms of tissue distribution, predominantly expressed in bone marrow, spleen and lung. Low levels in heart, brain, liver, muscle, thymus, kidney and testis. Highly expressed in B-cells and macrophages.

The protein localises to the cytoplasm. The protein resides in the cell membrane. Its function is as follows. DOK proteins are enzymatically inert adaptor or scaffolding proteins. They provide a docking platform for the assembly of multimolecular signaling complexes. DOK3 is a negative regulator of JNK signaling in B-cells through interaction with INPP5D/SHIP1. May modulate ABL1 function. The chain is Docking protein 3 (Dok3) from Mus musculus (Mouse).